The primary structure comprises 133 residues: MSWQAYVDDHLMCEIEGTNNHLTAAAILGVDGSVWAQSANFPQFKPDEISAVVKEFDEAGTLAPTGLHLGGTKYMVIQSEAGQVIRGKKGPGGICVKKTGQALIFGIYDEPVTPGQCNMIVERLGDYLIEQGL.

An intrachain disulfide couples C95 to C117.

This sequence belongs to the profilin family. Occurs in many kinds of cells as a complex with monomeric actin in a 1:1 ratio. As to expression, expressed in pollen (at protein and mRNA level).

It is found in the cytoplasm. The protein resides in the cytoskeleton. Binds to actin and affects the structure of the cytoskeleton. At high concentrations, profilin prevents the polymerization of actin, whereas it enhances it at low concentrations. This Kali turgidum (Prickly saltwort) protein is Profilin Sal k 4.0301.